The sequence spans 598 residues: UvrABC system protein C (598 aa).

The GIY-YIG domain occupies 14 to 91 (DQPGCYLMKD…IHKNNPKYNI (78 aa)). Positions 196–231 (TEIQDRLQEKMAYAAAHMEFEKAAEFRDQIKAIETV) constitute a UVR domain.

Belongs to the UvrC family. Interacts with UvrB in an incision complex.

The protein resides in the cytoplasm. In terms of biological role, the UvrABC repair system catalyzes the recognition and processing of DNA lesions. UvrC both incises the 5' and 3' sides of the lesion. The N-terminal half is responsible for the 3' incision and the C-terminal half is responsible for the 5' incision. The protein is UvrABC system protein C of Enterococcus faecalis (strain ATCC 700802 / V583).